Consider the following 415-residue polypeptide: MRIAVIGGGSSYTPELVKGLLDISEDVRIDEVIFYDIDEEKQKIVVDFVKRLVKDRFKVLISDTFEGAVVDAKYVIFQFRPGGLKGRENDEGIPLKYGLIGQETTGVGGFSAALRAFPIVEEYVDTVRKTSNATIVNFTNPSGHITEFVRNYLEYEKFIGLCNVPINFIREIAEMFSARLEDVFLKYYGLNHLSFIEKVFVKGEDVTEKVFENLKLKLSNIPDEDFPTWFYDSVRLIVNPYLRYYLMEKKMFKKISTHELRAREVMKIEKELFEKYRTAVEIPEELTKRGGSMYSTAAAHLIRDLETDEGKIHIVNTRNNGSIENLPDDYVLEIPCYVRSGRVHTLSQGKGDHFALSFIHAVKMYERLTIEAYLKRSKKLALKALLSHPLGPDVEDAKDLLEEILEANREYVKLG.

1–64 (MRIAVIGGGS…DRFKVLISDT (64 aa)) contacts NAD(+). Positions 87 and 140 each coordinate substrate. Residue Cys162 participates in Mn(2+) binding. Substrate is bound at residue Asn163. Residue His192 participates in Mn(2+) binding. The active-site Proton acceptor is the Tyr241. A substrate-binding site is contributed by Arg261.

It belongs to the glycosyl hydrolase 4 family. As to quaternary structure, homodimer or homotetramer. Exists in a homodimer/homotetramer equilibrium state in solution. Requires NAD(+) as cofactor. Mn(2+) serves as cofactor.

The enzyme catalyses 6-phospho-beta-D-glucosyl-(1-&gt;4)-D-glucose + H2O = D-glucose 6-phosphate + D-glucose. In terms of biological role, hydrolyzes cellobiose 6'-phosphate into glucose 6-phosphate (Glc6P) and glucose. The sequence is that of 6-phospho-beta-glucosidase BglT (bglT) from Thermotoga maritima (strain ATCC 43589 / DSM 3109 / JCM 10099 / NBRC 100826 / MSB8).